A 252-amino-acid polypeptide reads, in one-letter code: ATP-dependent L-serine kinase (252 aa).

Residue Glu35 is part of the active site. Position 73 (Val73) interacts with O-phospho-L-serine. Asp74 is a Mg(2+) binding site. 7 residues coordinate O-phospho-L-serine: Gly75, His76, His77, Trp107, Lys231, Thr233, and His235.

It belongs to the SerK family. As to quaternary structure, monomer. Requires Mg(2+) as cofactor.

It carries out the reaction L-serine + ATP = O-phospho-L-serine + ADP + H(+). Functionally, free serine kinase that uses ATP to phosphorylate L-serine to yield O-phospho-L-serine and ADP. Can use ATP, UTP, CTP, GTP and the inorganic polyphosphates triphosphate and tetraphosphate as phosphate donors, with a preference for nucleoside 5'-triphosphates, but cannot use ADP. The catalytic efficiency is highest for ATP. Is specific for L-serine and cannot phosphorylate structurally similar compounds such as D-serine, L-threonine, L-homoserine, hydroxypyruvate, 3-hydroxypropionate and DL-glycerate. Likely contributes to serine metabolism, including cysteine biosynthesis. The protein is ATP-dependent L-serine kinase of Staphylothermus marinus (strain ATCC 43588 / DSM 3639 / JCM 9404 / F1).